We begin with the raw amino-acid sequence, 233 residues long: Large ribosomal subunit protein uL1 (233 aa).

This sequence belongs to the universal ribosomal protein uL1 family. In terms of assembly, part of the 50S ribosomal subunit.

Binds directly to 23S rRNA. The L1 stalk is quite mobile in the ribosome, and is involved in E site tRNA release. Its function is as follows. Protein L1 is also a translational repressor protein, it controls the translation of the L11 operon by binding to its mRNA. The protein is Large ribosomal subunit protein uL1 of Aeromonas hydrophila subsp. hydrophila (strain ATCC 7966 / DSM 30187 / BCRC 13018 / CCUG 14551 / JCM 1027 / KCTC 2358 / NCIMB 9240 / NCTC 8049).